A 424-amino-acid polypeptide reads, in one-letter code: Serine--tRNA ligase (424 aa).

230–232 is an L-serine binding site; sequence TAE. 261-263 lines the ATP pocket; sequence RAE. Glu284 lines the L-serine pocket. 348 to 351 is an ATP binding site; the sequence is EISS. Ser384 is a binding site for L-serine.

Belongs to the class-II aminoacyl-tRNA synthetase family. Type-1 seryl-tRNA synthetase subfamily. Homodimer. The tRNA molecule binds across the dimer.

The protein resides in the cytoplasm. The enzyme catalyses tRNA(Ser) + L-serine + ATP = L-seryl-tRNA(Ser) + AMP + diphosphate + H(+). It carries out the reaction tRNA(Sec) + L-serine + ATP = L-seryl-tRNA(Sec) + AMP + diphosphate + H(+). It participates in aminoacyl-tRNA biosynthesis; selenocysteinyl-tRNA(Sec) biosynthesis; L-seryl-tRNA(Sec) from L-serine and tRNA(Sec): step 1/1. Functionally, catalyzes the attachment of serine to tRNA(Ser). Is also able to aminoacylate tRNA(Sec) with serine, to form the misacylated tRNA L-seryl-tRNA(Sec), which will be further converted into selenocysteinyl-tRNA(Sec). The polypeptide is Serine--tRNA ligase (Desulforamulus reducens (strain ATCC BAA-1160 / DSM 100696 / MI-1) (Desulfotomaculum reducens)).